The primary structure comprises 552 residues: Alpha-galactosidase (552 aa).

Residues Trp65, Tyr191, 220 to 221, 325 to 327, Cys368, and Arg383 each bind substrate; these read DD and KID. Catalysis depends on Asp327, which acts as the Nucleophile. Asp387 functions as the Proton donor/acceptor in the catalytic mechanism.

This sequence belongs to the glycosyl hydrolase 36 family. As to quaternary structure, homodimer.

It carries out the reaction Hydrolysis of terminal, non-reducing alpha-D-galactose residues in alpha-D-galactosides, including galactose oligosaccharides, galactomannans and galactolipids.. Inhibited by hydrolysis product alpha-galactopyranose and to a lesser extent by beta-galactopyranose, its mutarotational product. Inhibited by synthetic cyclopropyl carbasugars. Functionally, hydrolyzes the short-chain alpha-galactosaccharides raffinose, melibiose and stachyose. In Thermotoga maritima (strain ATCC 43589 / DSM 3109 / JCM 10099 / NBRC 100826 / MSB8), this protein is Alpha-galactosidase.